Consider the following 414-residue polypeptide: MLLITEILIINFFAATDLVQLYIVYEASLIPMVIMIGVWGSRTEKKIAAFQILIYTLIGSIFMLMSIGLLYSTLGTTDYILIREYIEVLPENVRKIIFIGFFIGFAVKIPIAPLHLWLLRAHVEAPTAGSVLLAGILLKLGGYGYIRYNIGLFPDLCEYYFPIIGGICLISILYTGIATLTQLDVKRIVAYSSISHMNVIVLGLFSGVLQGLEGGIILMIGHGIVSGGLFLCIGVIYDRCKTRILYAYNNLVHMMPIMAILFFLLVLGNIAFPITSNFVGELLIFIGLIKKNIIIAFFSALSMIITAIYSFWLYNRIFFVNEIITREANEGIQMEVNKMTIKEGGINKKVTEGEIIGELEYPQYIKKESMKYSDVNIFEFVSIGLMVILMLIVGMKPSLVEGYIAINCLELISK.

Helical transmembrane passes span 18-38, 47-67, 96-116, 126-146, 160-180, 188-208, 216-236, 254-274, 293-313, and 375-395; these read LVQLYIVYEASLIPMVIMIGV, IAAFQILIYTLIGSIFMLMSI, IIFIGFFIGFAVKIPIAPLHL, PTAGSVLLAGILLKLGGYGYI, YFPIIGGICLISILYTGIATL, IVAYSSISHMNVIVLGLFSGV, IILMIGHGIVSGGLFLCIGVI, MMPIMAILFFLLVLGNIAFPI, IIIAFFSALSMIITAIYSFWL, and VNIFEFVSIGLMVILMLIVGM.

It belongs to the complex I subunit 4 family.

The protein localises to the mitochondrion membrane. The catalysed reaction is a ubiquinone + NADH + 5 H(+)(in) = a ubiquinol + NAD(+) + 4 H(+)(out). Core subunit of the mitochondrial membrane respiratory chain NADH dehydrogenase (Complex I) that is believed to belong to the minimal assembly required for catalysis. Complex I functions in the transfer of electrons from NADH to the respiratory chain. The immediate electron acceptor for the enzyme is believed to be ubiquinone. The sequence is that of NADH-ubiquinone oxidoreductase chain 4 (nad4) from Dictyostelium citrinum (Slime mold).